We begin with the raw amino-acid sequence, 763 residues long: MAGFDWFWKALGGKSGRNQKRSVAIVNQAENHVAELDALDDVALAQRAKDLASGGRIDNHAEFLAILGVASQRTLGLKPYPAQSQAVLRLIEGDVVHMATGEGKTLVGAMAATGLGLMGKRVHSITVNDYLAVRDAEWMRPLVEFFGLSVASISEKMDAGERRQAYKAAIVYGPVNEIGFDVLRDQLITRREDAVQHGADVAIIDEADSVLVDEALVPLVLAGNQPGHAPRGKITDVVRSLKENDDYTIDDDRRNVFLTDKGAAKLEQQLGISSLYDDEHVGSTLVQVNLALHAQALLIRDIHYIVRDSKVLLIDASRGRVADLQRWPDGLQAAVEAKEGLAVSEGGKILDTITLQALIGRYPMACGMTGTAVEATNQLRTFYDLHVSVIERNHPLKRFDEADRIYATMAEKNRAIIDEIALLHSTGQPVLVGTHDVAESEELATALRELNIEVSVLNAKNDAEEAQIIAEAGDIGRVTVSTQMAGRGTDIRLGGADEADYDEVVKLGGLAVIGTARHRSQRLDNQLRGRAGRQGDPGLSLFFVSLDDDVVVSGGSGESVSAQPDATGLIDSDRIRDWVGHCQRVTEGQLLEIHSQSWNYNKLLADQRVIIDERRERLLDTALAWEELAQHAPARAAELEDLDQSVREQAGRDIMLYHLDYNWSEHLALMDDVRESIHLRAIARETPLDEYHRIAVREFKDLAQRAVDDAVSTFKSVTIDHEGAHLDDEGLARPSATWTYMVSDNPLAGSGNSVISGIGNIFR.

ATP-binding positions include glutamine 83, 101 to 105 (GEGKT), and aspartate 490.

Belongs to the SecA family. As to quaternary structure, monomer and homodimer. Part of the essential Sec protein translocation apparatus which comprises SecA, SecYEG and auxiliary proteins SecDF. Other proteins may also be involved.

It is found in the cell membrane. The protein localises to the cytoplasm. The enzyme catalyses ATP + H2O + cellular proteinSide 1 = ADP + phosphate + cellular proteinSide 2.. Functionally, part of the Sec protein translocase complex. Interacts with the SecYEG preprotein conducting channel. Has a central role in coupling the hydrolysis of ATP to the transfer of proteins into and across the cell membrane, serving as an ATP-driven molecular motor driving the stepwise translocation of polypeptide chains across the membrane. In Corynebacterium glutamicum (strain R), this protein is Protein translocase subunit SecA 2.